A 90-amino-acid chain; its full sequence is MMKTTIMFMLVVVISLTYSSEEQEVARTYCGAHLANTLADLCFGVEKRSGAQYAPYFWTRQYLGSRGKRGVVDECCFQPCTLDVLLSYCG.

An N-terminal signal peptide occupies residues 1-20 (MMKTTIMFMLVVVISLTYSS). 3 disulfide bridges follow: C30–C76, C42–C89, and C75–C80. The propeptide at 49–67 (SGAQYAPYFWTRQYLGSRG) is c peptide like.

It belongs to the insulin family. As to quaternary structure, heterodimer of a B chain and an A chain linked by two disulfide bonds.

The protein localises to the secreted. Functionally, brain peptide responsible for activation of prothoracic glands to produce ecdysone in insects. This Bombyx mori (Silk moth) protein is Bombyxin B-12 (BBXB12).